Here is a 157-residue protein sequence, read N- to C-terminus: SsrA-binding protein (157 aa).

The segment at Leu133–Gly157 is disordered. Basic and acidic residues predominate over residues Asp135 to Arg151.

Belongs to the SmpB family.

It localises to the cytoplasm. Functionally, required for rescue of stalled ribosomes mediated by trans-translation. Binds to transfer-messenger RNA (tmRNA), required for stable association of tmRNA with ribosomes. tmRNA and SmpB together mimic tRNA shape, replacing the anticodon stem-loop with SmpB. tmRNA is encoded by the ssrA gene; the 2 termini fold to resemble tRNA(Ala) and it encodes a 'tag peptide', a short internal open reading frame. During trans-translation Ala-aminoacylated tmRNA acts like a tRNA, entering the A-site of stalled ribosomes, displacing the stalled mRNA. The ribosome then switches to translate the ORF on the tmRNA; the nascent peptide is terminated with the 'tag peptide' encoded by the tmRNA and targeted for degradation. The ribosome is freed to recommence translation, which seems to be the essential function of trans-translation. In Nitrobacter winogradskyi (strain ATCC 25391 / DSM 10237 / CIP 104748 / NCIMB 11846 / Nb-255), this protein is SsrA-binding protein.